Reading from the N-terminus, the 276-residue chain is N-acyl homoserine lactonase AiiB (276 aa).

Zn(2+)-binding residues include His-111, His-113, His-116, His-191, Asp-213, and His-259.

Belongs to the metallo-beta-lactamase superfamily. It depends on Zn(2+) as a cofactor.

The enzyme catalyses an N-acyl-L-homoserine lactone + H2O = an N-acyl-L-homoserine + H(+). In Rhizobium rhizogenes (strain K84 / ATCC BAA-868) (Agrobacterium radiobacter), this protein is N-acyl homoserine lactonase AiiB.